The sequence spans 432 residues: Cysteine desulfurase, mitosomal (432 aa).

Residues 102–103 (AT), Gln-212, and 232–234 (CAH) contribute to the pyridoxal 5'-phosphate site. Lys-235 is subject to N6-(pyridoxal phosphate)lysine. Thr-272 lines the pyridoxal 5'-phosphate pocket. Residue Cys-357 is the Cysteine persulfide intermediate of the active site. Cys-357 provides a ligand contact to [2Fe-2S] cluster.

This sequence belongs to the class-V pyridoxal-phosphate-dependent aminotransferase family. NifS/IscS subfamily. Pyridoxal 5'-phosphate serves as cofactor.

It localises to the mitosome. The enzyme catalyses (sulfur carrier)-H + L-cysteine = (sulfur carrier)-SH + L-alanine. Catalyzes the removal of elemental sulfur from cysteine to produce alanine. It supplies the inorganic sulfur for iron-sulfur (Fe-S) clusters in mitosomes. This Encephalitozoon cuniculi (strain GB-M1) (Microsporidian parasite) protein is Cysteine desulfurase, mitosomal.